Reading from the N-terminus, the 431-residue chain is UDP-N-acetylmuramoylalanine--D-glutamate ligase (431 aa).

An ATP-binding site is contributed by 111–117 (GTDGKST).

It belongs to the MurCDEF family.

It is found in the cytoplasm. It carries out the reaction UDP-N-acetyl-alpha-D-muramoyl-L-alanine + D-glutamate + ATP = UDP-N-acetyl-alpha-D-muramoyl-L-alanyl-D-glutamate + ADP + phosphate + H(+). It participates in cell wall biogenesis; peptidoglycan biosynthesis. In terms of biological role, cell wall formation. Catalyzes the addition of glutamate to the nucleotide precursor UDP-N-acetylmuramoyl-L-alanine (UMA). This is UDP-N-acetylmuramoylalanine--D-glutamate ligase from Petrotoga mobilis (strain DSM 10674 / SJ95).